A 155-amino-acid polypeptide reads, in one-letter code: Protein SprT-like (155 aa).

In terms of domain architecture, SprT-like spans 7–145 (QQHMEEVSLQ…GSCGGRLKQT (139 aa)). Residue His-67 participates in Zn(2+) binding. The active site involves Glu-68. His-71 is a binding site for Zn(2+).

This sequence belongs to the SprT family. Requires Zn(2+) as cofactor.

Its subcellular location is the cytoplasm. The sequence is that of Protein SprT-like from Listeria innocua serovar 6a (strain ATCC BAA-680 / CLIP 11262).